The chain runs to 563 residues: Tripeptidyl-peptidase 1 (563 aa).

Positions 1 to 19 (MGLQACLLGLFALILSGKC) are cleaved as a signal peptide. Positions 20-195 (SYSPEPDQRR…PEPQVTGTVG (176 aa)) are cleaved as a propeptide — removed in mature form. A disulfide bridge links C111 with C122. Residues 199 to 563 (GVTPSVIRKR…PALLKTLLNP (365 aa)) form the Peptidase S53 domain. N-linked (GlcNAc...) asparagine glycans are attached at residues N210 and N222. Residues E272 and D276 each act as charge relay system in the active site. N286, N313, and N443 each carry an N-linked (GlcNAc...) asparagine glycan. Cystine bridges form between C365/C526 and C522/C537. The Charge relay system role is filled by S475. Ca(2+) contacts are provided by D517 and V518. Ca(2+) is bound by residues G539, G541, and D543.

Monomer. Interacts with CLN5. Interacts with CLN3. Ca(2+) serves as cofactor. Activated by autocatalytic proteolytical processing upon acidification. N-glycosylation is required for processing and activity. As to expression, detected in all tissues examined with highest levels in heart and placenta and relatively similar levels in other tissues.

Its subcellular location is the lysosome. The protein localises to the melanosome. It catalyses the reaction Release of an N-terminal tripeptide from a polypeptide, but also has endopeptidase activity.. Its activity is regulated as follows. Inhibited by diisopropyl fluorophosphate (DFP). Lysosomal serine protease with tripeptidyl-peptidase I activity. May act as a non-specific lysosomal peptidase which generates tripeptides from the breakdown products produced by lysosomal proteinases. Requires substrates with an unsubstituted N-terminus. This is Tripeptidyl-peptidase 1 (TPP1) from Homo sapiens (Human).